A 381-amino-acid polypeptide reads, in one-letter code: Spindlin interactor and repressor of chromatin-binding protein (381 aa).

Residues 42–73 (RVTQQEKTPPPRPSPLEAGSDGCEEPKQQVSW) form a disordered region. Residue K48 forms a Glycyl lysine isopeptide (Lys-Gly) (interchain with G-Cter in SUMO2) linkage. S121 and S148 each carry phosphoserine. Disordered stretches follow at residues 144 to 264 (AEQP…EVRH), 283 to 320 (QLRG…LRGT), and 339 to 381 (LQDW…GNGV). Glycyl lysine isopeptide (Lys-Gly) (interchain with G-Cter in SUMO2) cross-links involve residues K189 and K220. Over residues 218-228 (RWKEPPGEEPV) the composition is skewed to basic and acidic residues. A phosphoserine mark is found at S248 and S251. Residues 287-299 (PDSKDSPKDREVA) show a composition bias toward basic and acidic residues. Glycyl lysine isopeptide (Lys-Gly) (interchain with G-Cter in SUMO2) cross-links involve residues K290 and K294. Phosphoserine is present on residues S308 and S310. K374 is covalently cross-linked (Glycyl lysine isopeptide (Lys-Gly) (interchain with G-Cter in SUMO2)).

In terms of assembly, interacts with SPIN1, SPIN2A, SPIN2B, SPIN3 and SPIN4. Interacts with TCF7L2 in a SPIN1-dependent manner. Interacts with PARP1; promoting PARP1 ADP-ribosyltransferase activity.

It localises to the nucleus. The protein resides in the chromosome. Functionally, chromatin protein that stabilizes SPIN1 and enhances its association with histone H3 trimethylated at both 'Lys-4' and 'Lys-9' (H3K4me3K9me3). Positively regulates poly-ADP-ribosylation in response to DNA damage; acts by facilitating PARP1 ADP-ribosyltransferase activity. The polypeptide is Spindlin interactor and repressor of chromatin-binding protein (Homo sapiens (Human)).